Here is a 247-residue protein sequence, read N- to C-terminus: Translation initiation factor IF-3 (247 aa).

Disordered regions lie at residues 1 to 20 (MIRE…TNRR) and 188 to 247 (LVRQ…PTAS). The needed for vegetative and developmental functions, but not for viability stretch occupies residues 182–247 (AQKARELVRQ…AAEAQSPTAS (66 aa)). The segment covering 207 to 217 (AGKSAAGASSG) has biased composition (low complexity). A compositionally biased stretch (basic and acidic residues) spans 218-232 (AEEKAEETAEEKKEA). Positions 233–247 (QAAPAAAEAQSPTAS) are enriched in low complexity.

This sequence belongs to the IF-3 family. In terms of assembly, monomer.

The protein localises to the cytoplasm. Its function is as follows. IF-3 binds to the 30S ribosomal subunit and shifts the equilibrium between 70S ribosomes and their 50S and 30S subunits in favor of the free subunits, thus enhancing the availability of 30S subunits on which protein synthesis initiation begins. In Myxococcus xanthus, this protein is Translation initiation factor IF-3.